The chain runs to 465 residues: uncharacterized protein (465 aa).

The region spanning 1-50 (MEITDLAAEGNALCRIDDMVMFVPFAAPGDRCTVQVVKKKRNFMQGRIVS) is the TRAM domain. The [4Fe-4S] cluster site is built by cysteine 63, cysteine 69, cysteine 72, and cysteine 168. S-adenosyl-L-methionine contacts are provided by glutamine 293, tyrosine 322, glutamate 343, and aspartate 392. Cysteine 419 acts as the Nucleophile in catalysis.

Belongs to the class I-like SAM-binding methyltransferase superfamily. RNA M5U methyltransferase family.

This is an uncharacterized protein from Porphyromonas gingivalis (strain ATCC BAA-308 / W83).